A 377-amino-acid chain; its full sequence is Sodium-dependent organic anion transporter (377 aa).

The Extracellular segment spans residues Met1–Asn29. Asn4 carries an N-linked (GlcNAc...) asparagine glycan. Residues Leu30–Gly50 traverse the membrane as a helical segment. At Cys51–Gly67 the chain is on the cytoplasmic side. The helical transmembrane segment at Ile68–Ile88 threads the bilayer. The Extracellular portion of the chain corresponds to Ser89 to Ala97. The helical transmembrane segment at Ile98–Trp118 threads the bilayer. The Cytoplasmic portion of the chain corresponds to Val119–Ser133. A helical transmembrane segment spans residues Thr134–Leu154. Topologically, residues Glu155–Thr159 are extracellular. A glycan (N-linked (GlcNAc...) asparagine) is linked at Asn157. The chain crosses the membrane as a helical span at residues Ile160–Ile180. Residues Tyr181 to Lys195 lie on the Cytoplasmic side of the membrane. A helical membrane pass occupies residues Ile196–Met216. The Extracellular segment spans residues Lys217 to Asp223. A helical membrane pass occupies residues Ile224–Leu244. Over Ala245–Thr257 the chain is Cytoplasmic. The helical transmembrane segment at Ile258 to Phe278 threads the bilayer. Residues Thr279 to Gln285 are Extracellular-facing. A helical membrane pass occupies residues Ile286–Ala306. At Ala307–Lys377 the chain is on the cytoplasmic side. The segment at His319–Lys377 is disordered.

It belongs to the bile acid:sodium symporter (BASS) (TC 2.A.28) family. In terms of processing, glycosylated.

It localises to the membrane. It catalyses the reaction estrone 3-sulfate(out) + 2 Na(+)(out) = estrone 3-sulfate(in) + 2 Na(+)(in). The catalysed reaction is 17beta-estradiol 3-sulfate(out) + 2 Na(+)(out) = 17beta-estradiol 3-sulfate(in) + 2 Na(+)(in). It carries out the reaction dehydroepiandrosterone 3-sulfate(out) + 2 Na(+)(out) = dehydroepiandrosterone 3-sulfate(in) + 2 Na(+)(in). The enzyme catalyses androst-5-ene-diol 3-sulfate(out) + 2 Na(+)(out) = androst-5-ene-diol 3-sulfate(in) + 2 Na(+)(in). It catalyses the reaction pregnenolone sulfate(out) + 2 Na(+)(out) = pregnenolone sulfate(in) + 2 Na(+)(in). The catalysed reaction is taurolithocholate 3-sulfate(out) + 2 Na(+)(out) = taurolithocholate 3-sulfate(in) + 2 Na(+)(in). It carries out the reaction androsterone 3alpha-sulfate(out) + 2 Na(+)(out) = androsterone 3alpha-sulfate(in) + 2 Na(+)(in). The enzyme catalyses 5alpha-dihydrotestosterone sulfate(out) + 2 Na(+)(out) = 5alpha-dihydrotestosterone sulfate(in) + 2 Na(+)(in). It catalyses the reaction 17beta-estradiol 17-sulfate(out) + 2 Na(+)(out) = 17beta-estradiol 17-sulfate(in) + 2 Na(+)(in). The catalysed reaction is 17alpha-hydroxypregnenolone 3-sulfate(out) + 2 Na(+)(out) = 17alpha-hydroxypregnenolone 3-sulfate(in) + 2 Na(+)(in). It carries out the reaction epiandrosterone 3-sulfate(out) + 2 Na(+)(out) = epiandrosterone 3-sulfate(in) + 2 Na(+)(in). The enzyme catalyses epitestosterone 17-sulfate(out) + 2 Na(+)(out) = epitestosterone 17-sulfate(in) + 2 Na(+)(in). It catalyses the reaction testosterone 17-sulfate(out) + 2 Na(+)(out) = testosterone 17-sulfate(in) + 2 Na(+)(in). The catalysed reaction is 16alpha-hydroxydehydroepiandrosterone 3-sulfate(out) + 2 Na(+)(out) = 16alpha-hydroxydehydroepiandrosterone 3-sulfate(in) + 2 Na(+)(in). Functionally, transports sulfoconjugated steroid hormones from the extracellular compartment into the cytosol in a sodium-dependent manner without hydrolysis. Steroid sulfate hormones are commonly considered to be biologically inactive metabolites, that may be activated by steroid sulfatases into free steroids. May play an important role by delivering sulfoconjugated steroids to specific target cells in reproductive organs. May play a role transporting the estriol precursor 16alpha-hydroxydehydroepiandrosterone 3-sulfate (16a-OH-DHEAS) at the fetal blood vessel endothelium. Can also transport other sulfoconjugated molecules such as taurolithocholic acid-3-sulfate and sulfoconjugated pyrenes. This chain is Sodium-dependent organic anion transporter (SLC10A6), found in Bos taurus (Bovine).